The sequence spans 504 residues: Maturase K (504 aa).

This sequence belongs to the intron maturase 2 family. MatK subfamily.

The protein resides in the plastid. It is found in the chloroplast. Usually encoded in the trnK tRNA gene intron. Probably assists in splicing its own and other chloroplast group II introns. The chain is Maturase K from Hamamelis mollis (Chinese witch hazel).